The following is a 155-amino-acid chain: Protein-export protein SecB (155 aa).

It belongs to the SecB family. Homotetramer, a dimer of dimers. One homotetramer interacts with 1 SecA dimer.

It is found in the cytoplasm. One of the proteins required for the normal export of preproteins out of the cell cytoplasm. It is a molecular chaperone that binds to a subset of precursor proteins, maintaining them in a translocation-competent state. It also specifically binds to its receptor SecA. This chain is Protein-export protein SecB, found in Escherichia coli O139:H28 (strain E24377A / ETEC).